We begin with the raw amino-acid sequence, 70 residues long: MTDKTFADRIDALEMRLTYQEETIETLNQAVTAQWKQIDALTRQVAELGERMREAEANRPGPTNEPPPHY.

The segment at 51 to 70 (RMREAEANRPGPTNEPPPHY) is disordered.

This sequence belongs to the SlyX family.

The chain is Protein SlyX homolog from Nitrobacter hamburgensis (strain DSM 10229 / NCIMB 13809 / X14).